A 301-amino-acid chain; its full sequence is Rhodopsin (301 aa).

Over 1-18 (LHMIHLHWYQYPPMNPMM) the chain is Extracellular. A helical membrane pass occupies residues 19–43 (YPLLLIFMFITGIPCLAGNFVTIWV). At 44–55 (FMTTKSLRSPAN) the chain is on the cytoplasmic side. A helical membrane pass occupies residues 56-78 (LLVVNLAMSDFLMMFTMFPPMMI). Residues 79 to 92 (TCYYHTWTLGPTFC) lie on the Extracellular side of the membrane. Cysteine 92 and cysteine 169 form a disulfide bridge. The helical transmembrane segment at 93 to 115 (QVYAFLGNLFGCTSIWTMVFITF) threads the bilayer. A 'Ionic lock' involved in activated form stabilization motif is present at residues 116–118 (DRY). Residues 116–134 (DRYNVIVKGVAGEPLSNKK) lie on the Cytoplasmic side of the membrane. Residues 135–155 (AALWILSAWVLSFSWCSAPFF) traverse the membrane as a helical segment. Topologically, residues 156–182 (GWNRYVPEGNLTGCGTDYLSEDALSRS) are extracellular. N-linked (GlcNAc...) asparagine glycosylation is present at asparagine 165. Residues 183–204 (YLYVYSVWVYFLPLLITIYCYV) form a helical membrane-spanning segment. The Cytoplasmic segment spans residues 205–245 (FIIKAVAAHEKGMRDQAKKMGIKSLRNEEAQKTSAECRLAK). The chain crosses the membrane as a helical span at residues 246–267 (IAMTTVALWFIAWTPYLLINWV). Residues 268 to 278 (GMFARSYLSPV) are Extracellular-facing. A helical membrane pass occupies residues 279-300 (YTIWGYVFAKANAVYNPIVYAI). Lysine 288 bears the N6-(retinylidene)lysine mark.

Belongs to the G-protein coupled receptor 1 family. Opsin subfamily. In terms of assembly, homodimer. Interacts with GNAQ. Contains one covalently linked retinal chromophore.

It is found in the cell projection. It localises to the rhabdomere membrane. In terms of biological role, photoreceptor required for image-forming vision at low light intensity. Can use both retinal and 3-dehydroretinal as visual pigment. Light-induced isomerization of 11-cis to all-trans retinal triggers a conformational change that activates signaling via G-proteins. Signaling via GNAQ probably mediates the activation of phospholipase C. In Cambarellus shufeldtii (Cajun dwarf crayfish), this protein is Rhodopsin (RHO).